We begin with the raw amino-acid sequence, 398 residues long: MSHRKFEAPRHGNLGFRPRKRAARHQGKVKSFPKDDRTQKVHLTAFMGYKAGMTHVVRDLEKPGSKMHKKEIVEAVTIIECPPMYIVGLVGYVETAQGLKTYKTVWAQHLSDNFRRRLYKNWYKSKSKKAFTKYVKQYETEEGKKSIEASLQAIKKRCSVVRVIAHTQVHKLKLTQKKAHVLEIQVNGGSIVEKVNFAVANFEKTVNVTGVFAENELIDVIGVTKGKGFNGVIKRWGVRKLPRKTHKGLRKVACIGAWHPSRVSTTVPRAGQLGYHHRVERNKKIYRIGQAQPEDGKQISTGKTEFDLTEKTINPMGGFAHYGMVKHEFLMLKGCVAGPRKRALTLRKSITTQTGRAALEKITLKFIDTSSKFGHGLHQTAEDKTKYFGVKKSRSTKA.

Residues 1–10 (MSHRKFEAPR) are compositionally biased toward basic and acidic residues. The tract at residues 1-34 (MSHRKFEAPRHGNLGFRPRKRAARHQGKVKSFPK) is disordered. A compositionally biased stretch (basic residues) spans 17-28 (RPRKRAARHQGK).

It belongs to the universal ribosomal protein uL3 family.

The protein localises to the cytoplasm. Functionally, the L3 protein is a component of the large subunit of cytoplasmic ribosomes. The sequence is that of Large ribosomal subunit protein uL3 (rpl3) from Dictyostelium discoideum (Social amoeba).